Reading from the N-terminus, the 460-residue chain is MTKPSDPTRDSHVAVLAFPFGTHAAPLLTVTRRLASASPSTVFSFFNTAQSNSSLFSSGDEADRPANIRVYDIADGVPEGYVFSGRPQEAIELFLQAAPENFRREIAKAETEVGTEVKCLMTDAFFWFAADMATEINASWIAFWTAGANSLSAHLYTDLIRETIGVKEVGERMEETIGVISGMEKIRVKDTPEGVVFGNLDSVFSKMLHQMGLALPRATAVFINSFEDLDPTLTNNLRSRFKRYLNIGPLGLLSSTLQQLVQDPHGCLAWMEKRSSGSVAYISFGTVMTPPPGELAAIAEGLESSKVPFVWSLKEKSLVQLPKGFLDRTREQGIVVPWAPQVELLKHEATGVFVTHCGWNSVLESVSGGVPMICRPFFGDQRLNGRAVEVVWEIGMTIINGVFTKDGFEKCLDKVLVQDDGKKMKCNAKKLKELAYEAVSSKGRSSENFRGLLDAVVNII.

Catalysis depends on His-23, which acts as the Proton acceptor. Residues His-23 and Gln-88 each coordinate an anthocyanidin. Asp-123 (charge relay) is an active-site residue. Thr-145 serves as a coordination point for UDP-alpha-D-glucose. His-154 contributes to the an anthocyanidin binding site. 7 residues coordinate UDP-alpha-D-glucose: Ala-339, Gln-341, His-356, Trp-359, Asn-360, Ser-361, and Glu-364. Gly-379 serves as a coordination point for an anthocyanidin. 2 residues coordinate UDP-alpha-D-glucose: Asp-380 and Gln-381.

Belongs to the UDP-glycosyltransferase family.

The catalysed reaction is a flavonol + UDP-alpha-D-glucose = a flavonol 3-O-beta-D-glucoside + UDP + H(+). It carries out the reaction quercetin + UDP-alpha-D-glucose = quercetin 3-O-beta-D-glucoside + UDP + H(+). It functions in the pathway flavonoid metabolism. Functionally, flavonol 3-O-glucosyltransferase that catalyzes the transfer of glucose from UDP-glucose to the 3-OH position of quercetin and kaempferol. Possesses high quercetin 3-O-glucosyltransferase activity in vitro. Catalyzes the glycosylation of anthocyanins from UDP-glucose. Also active in vitro on benzoates and benzoate derivatives. The polypeptide is Flavonol 3-O-glucosyltransferase (Arabidopsis thaliana (Mouse-ear cress)).